The sequence spans 117 residues: MDWTWRILFLVAAATGAHSQVQLVQSGSELKKPGASVKVSCKASGYTFTSYAMNWVRQAPGQGLEWMGWINTNTGNPTYAQGFTGRFVFSLDTSVSTAYLQICSLKAEDTAVYYCAR.

The first 19 residues, 1-19 (MDWTWRILFLVAAATGAHS), serve as a signal peptide directing secretion. A framework-1 region spans residues 20 to 44 (QVQLVQSGSELKKPGASVKVSCKAS). The 98-residue stretch at 20-117 (QVQLVQSGSE…EDTAVYYCAR (98 aa)) folds into the Ig-like domain. Cysteines 41 and 115 form a disulfide. Residues 45 to 52 (GYTFTSYA) are complementarity-determining-1. Residues 53–69 (MNWVRQAPGQGLEWMGW) form a framework-2 region. A complementarity-determining-2 region spans residues 70–77 (INTNTGNP). Positions 78-115 (TYAQGFTGRFVFSLDTSVSTAYLQICSLKAEDTAVYYC) are framework-3. The complementarity-determining-3 stretch occupies residues 116-117 (AR).

In terms of assembly, immunoglobulins are composed of two identical heavy chains and two identical light chains; disulfide-linked.

It localises to the secreted. It is found in the cell membrane. Its function is as follows. V region of the variable domain of immunoglobulin heavy chains that participates in the antigen recognition. Immunoglobulins, also known as antibodies, are membrane-bound or secreted glycoproteins produced by B lymphocytes. In the recognition phase of humoral immunity, the membrane-bound immunoglobulins serve as receptors which, upon binding of a specific antigen, trigger the clonal expansion and differentiation of B lymphocytes into immunoglobulins-secreting plasma cells. Secreted immunoglobulins mediate the effector phase of humoral immunity, which results in the elimination of bound antigens. The antigen binding site is formed by the variable domain of one heavy chain, together with that of its associated light chain. Thus, each immunoglobulin has two antigen binding sites with remarkable affinity for a particular antigen. The variable domains are assembled by a process called V-(D)-J rearrangement and can then be subjected to somatic hypermutations which, after exposure to antigen and selection, allow affinity maturation for a particular antigen. The protein is Immunoglobulin heavy variable 7-4-1 of Homo sapiens (Human).